The primary structure comprises 594 residues: UvrABC system protein C (594 aa).

Residues 14-91 form the GIY-YIG domain; the sequence is DKPGCYLMKD…IKKHDPKYNV (78 aa). The UVR domain occupies 196 to 231; it reads SDIKEQLRERMEKAAEDLDFERAKELRDTIAQMEKV.

It belongs to the UvrC family. Interacts with UvrB in an incision complex.

It localises to the cytoplasm. In terms of biological role, the UvrABC repair system catalyzes the recognition and processing of DNA lesions. UvrC both incises the 5' and 3' sides of the lesion. The N-terminal half is responsible for the 3' incision and the C-terminal half is responsible for the 5' incision. In Shouchella clausii (strain KSM-K16) (Alkalihalobacillus clausii), this protein is UvrABC system protein C.